A 47-amino-acid chain; its full sequence is Large ribosomal subunit protein bL34 (47 aa).

The protein belongs to the bacterial ribosomal protein bL34 family.

The polypeptide is Large ribosomal subunit protein bL34 (Mycobacterium sp. (strain JLS)).